Here is a 281-residue protein sequence, read N- to C-terminus: Phosphatidylglycerol--prolipoprotein diacylglyceryl transferase (281 aa).

The next 7 helical transmembrane spans lie at 11–31 (IIFTIGPVSARWYGFMYVISF), 57–77 (LLYAIFLGSCIGGRIGYIIFY), 89–109 (VFYIWEGGMSFHGGLIGAIIV), 121–141 (ILEISDFITPLIPFGLGAGRI), 194–214 (PTQLYEFFLEGILLFFIIYFF), 222–242 (GSISGLFLIFYGLFRIFIEFF), and 255–275 (IITMGQILSLPMIIAGLIIMY). Arg-140 serves as a coordination point for a 1,2-diacyl-sn-glycero-3-phospho-(1'-sn-glycerol).

It belongs to the Lgt family.

Its subcellular location is the cell inner membrane. It catalyses the reaction L-cysteinyl-[prolipoprotein] + a 1,2-diacyl-sn-glycero-3-phospho-(1'-sn-glycerol) = an S-1,2-diacyl-sn-glyceryl-L-cysteinyl-[prolipoprotein] + sn-glycerol 1-phosphate + H(+). The protein operates within protein modification; lipoprotein biosynthesis (diacylglyceryl transfer). In terms of biological role, catalyzes the transfer of the diacylglyceryl group from phosphatidylglycerol to the sulfhydryl group of the N-terminal cysteine of a prolipoprotein, the first step in the formation of mature lipoproteins. The polypeptide is Phosphatidylglycerol--prolipoprotein diacylglyceryl transferase (Buchnera aphidicola subsp. Acyrthosiphon pisum (strain Tuc7)).